We begin with the raw amino-acid sequence, 161 residues long: Regulator of ribonuclease activity A (161 aa).

Belongs to the RraA family. Homotrimer. Binds to both RNA-binding sites in the C-terminal region of Rne and to RhlB.

It is found in the cytoplasm. Functionally, globally modulates RNA abundance by binding to RNase E (Rne) and regulating its endonucleolytic activity. Can modulate Rne action in a substrate-dependent manner by altering the composition of the degradosome. Modulates RNA-binding and helicase activities of the degradosome. This is Regulator of ribonuclease activity A from Serratia proteamaculans (strain 568).